The following is a 402-amino-acid chain: Multidrug resistance protein MdtH (402 aa).

At 1-12 (MSRVSQARNLGK) the chain is on the cytoplasmic side. The chain crosses the membrane as a helical span at residues 13–33 (YFLLIDNMLVVLGFFVVFPLI). Over 34 to 98 (SIRFVDQMGW…GFATMGIAHE (65 aa)) the chain is Periplasmic. Residues 99 to 116 (PWLLWFSCLLSGLGGTLF) traverse the membrane as a helical segment. At 117-138 (DPPRSALVVKLIRPQQRGRFFS) the chain is on the cytoplasmic side. The chain crosses the membrane as a helical span at residues 139–159 (LLMMQDSAGAVIGALLGSWLL). The Periplasmic portion of the chain corresponds to 160–164 (QYDFR). The chain crosses the membrane as a helical span at residues 165–185 (LVCATGAVLFVLCAAFNAWLL). The Cytoplasmic portion of the chain corresponds to 186 to 213 (PAWKLSTVRTPVREGMTRVMRDKRFVTY). Residues 214-234 (VLTLAGYYMLAVQVMLMLPIM) form a helical membrane-spanning segment. The Periplasmic portion of the chain corresponds to 235-243 (VNDVAGAPS). Residues 244–264 (AVKWMYAIEACLSLTLLYPIA) traverse the membrane as a helical segment. The Cytoplasmic portion of the chain corresponds to 265 to 276 (RWSEKHFRLEHR). The chain crosses the membrane as a helical span at residues 277 to 297 (LMAGLLIMSLSMMPVGMVSGL). Over 298-299 (QQ) the chain is Periplasmic. Residues 300–320 (LFTLICLFYIGSIIAEPARET) traverse the membrane as a helical segment. At 321–339 (LSASLADARARGSYMGCSR) the chain is on the cytoplasmic side. A helical membrane pass occupies residues 340-360 (LGLAIGGAIGYIGGGWLFDLG). Residues 361-367 (KSAHQPE) are Periplasmic-facing. Residues 368-388 (LPWMMLGIIGIFTFLALGWQF) traverse the membrane as a helical segment. The Cytoplasmic segment spans residues 389–402 (SQKRAARRLLERDA).

Belongs to the major facilitator superfamily. DHA1 family. MdtH (TC 2.A.1.2.21) subfamily.

It is found in the cell inner membrane. Functionally, confers resistance to norfloxacin and enoxacin. The chain is Multidrug resistance protein MdtH from Escherichia coli (strain SE11).